Consider the following 602-residue polypeptide: Glutaminase liver isoform, mitochondrial (602 aa).

The N-terminal 14 residues, 1–14 (MRSMRALQNALSRA), are a transit peptide targeting the mitochondrion. Disordered regions lie at residues 1–29 (MRSM…PSRG) and 45–66 (AQGR…ASHS). A substrate-binding site is contributed by serine 219. At lysine 253 the chain carries N6-succinyllysine. Asparagine 268 contacts substrate. 2 positions are modified to N6-acetyllysine: lysine 279 and lysine 284. The substrate site is built by glutamate 314 and asparagine 321. Lysine 329 is subject to N6-acetyllysine. Substrate is bound by residues tyrosine 347, tyrosine 399, and valine 417. ANK repeat units follow at residues 518–551 (DSRT…VKDR) and 552–585 (WGNI…SETQ).

The protein belongs to the glutaminase family. Homotetramer, dimer of dimers. Does not assemble into higher oligomers. Interacts with the PDZ domain of the syntrophin SNTA1. Interacts with the PDZ domain of TAX1BP3.

The protein localises to the mitochondrion. It catalyses the reaction L-glutamine + H2O = L-glutamate + NH4(+). Enzyme activity is not stimulated by phosphate. Phosphate increases kcat, but decreases substrate affinity, resulting in unchanged enzyme activity. Functionally, plays an important role in the regulation of glutamine catabolism. Promotes mitochondrial respiration and increases ATP generation in cells by catalyzing the synthesis of glutamate and alpha-ketoglutarate. Increases cellular anti-oxidant function via NADH and glutathione production. May play a role in preventing tumor proliferation. The chain is Glutaminase liver isoform, mitochondrial (Gls2) from Mus musculus (Mouse).